We begin with the raw amino-acid sequence, 380 residues long: Cytochrome b (380 aa).

The next 4 helical transmembrane spans lie at 34-54, 78-99, 114-134, and 179-199; these read FGSL…FLAM, WLLR…YFHI, WNIG…GYVL, and FFTF…IHLL. The heme b site is built by H84 and H98. Residue H197 participates in heme b binding. Residue H202 coordinates a ubiquinone. Transmembrane regions (helical) follow at residues 227 to 247, 289 to 309, 321 to 341, and 348 to 368; these read FKDL…STFA, LGGV…PITH, TAKA…WIGG, and FISI…LIIP.

This sequence belongs to the cytochrome b family. The cytochrome bc1 complex contains 3 respiratory subunits (MT-CYB, CYC1 and UQCRFS1), 2 core proteins (UQCRC1 and UQCRC2) and probably 6 low-molecular weight proteins. Heme b is required as a cofactor.

The protein localises to the mitochondrion inner membrane. In terms of biological role, component of the ubiquinol-cytochrome c reductase complex (complex III or cytochrome b-c1 complex) that is part of the mitochondrial respiratory chain. The b-c1 complex mediates electron transfer from ubiquinol to cytochrome c. Contributes to the generation of a proton gradient across the mitochondrial membrane that is then used for ATP synthesis. This is Cytochrome b (mt-cyb) from Glandirana rugosa (Japanese wrinkled frog).